A 504-amino-acid chain; its full sequence is Cytochrome P450 2D10 (504 aa).

An O-linked (GlcNAc) serine glycan is attached at Ser-382. Cys-446 provides a ligand contact to heme.

This sequence belongs to the cytochrome P450 family. Heme is required as a cofactor.

Its subcellular location is the endoplasmic reticulum membrane. It is found in the microsome membrane. The catalysed reaction is an organic molecule + reduced [NADPH--hemoprotein reductase] + O2 = an alcohol + oxidized [NADPH--hemoprotein reductase] + H2O + H(+). In terms of biological role, cytochromes P450 are a group of heme-thiolate monooxygenases. In liver microsomes, this enzyme is involved in an NADPH-dependent electron transport pathway. It oxidizes a variety of structurally unrelated compounds, including steroids, fatty acids, and xenobiotics. This chain is Cytochrome P450 2D10 (Cyp2d10), found in Rattus norvegicus (Rat).